The primary structure comprises 330 residues: Aspartate--ammonia ligase (330 aa).

This sequence belongs to the class-II aminoacyl-tRNA synthetase family. AsnA subfamily.

It localises to the cytoplasm. It carries out the reaction L-aspartate + NH4(+) + ATP = L-asparagine + AMP + diphosphate + H(+). It functions in the pathway amino-acid biosynthesis; L-asparagine biosynthesis; L-asparagine from L-aspartate (ammonia route): step 1/1. The chain is Aspartate--ammonia ligase from Streptococcus pyogenes serotype M1.